We begin with the raw amino-acid sequence, 494 residues long: NADPH:adrenodoxin oxidoreductase, mitochondrial (494 aa).

Residues 1–34 (MAPRCWRWWSWSAWPGVRPLPSRSTPTPGFCKKF) constitute a mitochondrion transit peptide. Residues alanine 51, glutamate 72, leucine 80, and valine 116 each coordinate FAD. NADP(+) contacts are provided by residues 187–190 (QGNV), 231–232 (RR), and glutamate 243. A Phosphoserine modification is found at serine 313. Residues tryptophan 401 and 408–410 (GVI) contribute to the FAD site. Glycine 408 is a binding site for NADP(+).

Belongs to the ferredoxin--NADP reductase type 1 family. As to quaternary structure, monomer. Interacts directly with FDX1. The cofactor is FAD.

It is found in the mitochondrion inner membrane. The catalysed reaction is 2 reduced [adrenodoxin] + NADP(+) + H(+) = 2 oxidized [adrenodoxin] + NADPH. It carries out the reaction 2 reduced [2Fe-2S]-[ferredoxin] + NADP(+) + H(+) = 2 oxidized [2Fe-2S]-[ferredoxin] + NADPH. It participates in steroid metabolism; cholesterol metabolism. Its function is as follows. Serves as the first electron transfer protein in all the mitochondrial P450 systems including cholesterol side chain cleavage in all steroidogenic tissues, steroid 11-beta hydroxylation in the adrenal cortex, 25-OH-vitamin D3-24 hydroxylation in the kidney, and sterol C-27 hydroxylation in the liver. Also acts as a ferredoxin--NADP(+) reductase essential for coenzyme Q biosynthesis: together with FDX2, transfers the electrons required for the hydroxylation reaction performed by COQ6. In Rattus norvegicus (Rat), this protein is NADPH:adrenodoxin oxidoreductase, mitochondrial (Fdxr).